The following is a 426-amino-acid chain: Neuromedin-U receptor 1 (426 aa).

Residues Met-1 to Ala-65 lie on the Extracellular side of the membrane. Residues Asn-7, Asn-27, and Asn-41 are each glycosylated (N-linked (GlcNAc...) asparagine). The helical transmembrane segment at Thr-66–Leu-86 threads the bilayer. Residues Arg-87–Tyr-97 are Cytoplasmic-facing. A helical membrane pass occupies residues Tyr-98 to Leu-118. The Extracellular portion of the chain corresponds to Tyr-119–Thr-138. A disulfide bridge connects residues Cys-134 and Cys-219. The chain crosses the membrane as a helical span at residues Leu-139–Val-161. Over Ala-162 to Val-181 the chain is Cytoplasmic. The helical transmembrane segment at Leu-182–Ile-202 threads the bilayer. Topologically, residues Arg-203–Thr-235 are extracellular. Residues Ala-236–Leu-256 form a helical membrane-spanning segment. At Arg-257 to Gln-294 the chain is on the cytoplasmic side. A helical membrane pass occupies residues Val-295 to Ala-315. The Extracellular portion of the chain corresponds to Asp-316–His-338. Residues Val-339–Met-359 form a helical membrane-spanning segment. Residues Ser-360 to Ser-426 are Cytoplasmic-facing.

Belongs to the G-protein coupled receptor 1 family. Expressed in greatest abundance in peripheral organs, particularly in elements of the gastrointestinal and urogenital systems with highest levels in testes. In central nervous system structures express levels are much lower than those seen in peripheral organs. Within the CNS, has been detected in highest abundance in the cerebellum, dorsal root ganglia, hippocampus, and spinal cord.

It localises to the cell membrane. Functionally, receptor for the neuromedin-U and neuromedin-S neuropeptides. This is Neuromedin-U receptor 1 (NMUR1) from Homo sapiens (Human).